The following is a 311-amino-acid chain: Formimidoylglutamase (311 aa).

Residues H130, D155, H157, D159, C242, and D244 each coordinate Mn(2+).

The protein belongs to the arginase family. Mn(2+) is required as a cofactor.

The catalysed reaction is N-formimidoyl-L-glutamate + H2O = formamide + L-glutamate. The protein operates within amino-acid degradation; L-histidine degradation into L-glutamate; L-glutamate from N-formimidoyl-L-glutamate (hydrolase route): step 1/1. Functionally, catalyzes the conversion of N-formimidoyl-L-glutamate to L-glutamate and formamide. The chain is Formimidoylglutamase from Staphylococcus aureus (strain MSSA476).